The chain runs to 582 residues: Zinc finger protein 319 (582 aa).

Over residues 1–14 (MSESWQQPPQTQPQ) the composition is skewed to low complexity. The tract at residues 1-39 (MSESWQQPPQTQPQQPQPPQPQHHAEPPPALAEHTLPPG) is disordered. A C2H2-type 1 zinc finger spans residues 76–100 (PKCGVCGHDLAHLSSPHEHQCLAGH). The C2H2-type 2; degenerate zinc-finger motif lies at 104–126 (FQCTQCLKIFHQATDLLEHQCVQ). K130 is covalently cross-linked (Glycyl lysine isopeptide (Lys-Gly) (interchain with G-Cter in SUMO2)). Residues 132–154 (FVCGVCKMGFSLLTSLAQHHSSH) form a C2H2-type 3 zinc finger. The segment covering 174–196 (EPATTAAPSLPAAPAPSTVTPAE) has biased composition (low complexity). The tract at residues 174–198 (EPATTAAPSLPAAPAPSTVTPAEQA) is disordered. C2H2-type zinc fingers lie at residues 202–224 (YSCPICQKPFKHLSELSRHERIH), 230–252 (YKCTLCDKSFSQSSHLVHHKRTH), and 258–280 (YKCAVCEKTFKHRSHLVRHMYAH). S281 carries the post-translational modification Phosphoserine. The segment at 287–309 (FRCNVCELHFKESSELLQHPCTP) adopts a C2H2-type 7; degenerate zinc-finger fold. C2H2-type zinc fingers lie at residues 315 to 337 (FRCGECQKAFKRPSDLRQHERTH), 343 to 365 (FKCDLCPMGFKQQYALMRHRRTH), and 371 to 393 (FKCGLCEKGFGQPSHLLYHQHVH). The C2H2-type 11; degenerate zinc finger occupies 399-421 (FKCPVCQKGFDQSAELLRHKCLP). The C2H2-type 12 zinc finger occupies 428–450 (FKCPVCNKAYKRASALQKHQLAH). The C2H2-type 13; degenerate zinc finger occupies 458–480 (LRCTLCERRFFSSSEFVQHRCDP). 3 consecutive C2H2-type zinc fingers follow at residues 486–508 (LKCPDCEKRFKYASDLQRHRRVH), 514–536 (YKCPNCDKAFKQREHLNKHQGVH), and 542–564 (FKCVWCGERFLDVALLQEHSAQH).

This sequence belongs to the krueppel C2H2-type zinc-finger protein family.

Its subcellular location is the nucleus. May be involved in transcriptional regulation. This Homo sapiens (Human) protein is Zinc finger protein 319 (ZNF319).